Consider the following 71-residue polypeptide: Large ribosomal subunit protein bL31 (71 aa).

Cysteine 16, cysteine 18, cysteine 37, and cysteine 40 together coordinate Zn(2+).

The protein belongs to the bacterial ribosomal protein bL31 family. Type A subfamily. Part of the 50S ribosomal subunit. It depends on Zn(2+) as a cofactor.

Functionally, binds the 23S rRNA. The polypeptide is Large ribosomal subunit protein bL31 (Nitratidesulfovibrio vulgaris (strain ATCC 29579 / DSM 644 / CCUG 34227 / NCIMB 8303 / VKM B-1760 / Hildenborough) (Desulfovibrio vulgaris)).